The sequence spans 256 residues: MYRVYKNNKFILISIPRITNKLWQKNCNLVILLGVLLVLTLFHDPIIVAALGGESNPAVGLFTFGDSYFDGGNKMFNFFWPYGKSRDDPNGKFSDGRIVPDFIAEFMGIPEEIPPVFKTAVDVLRGASFGVADASILGYPATSMTLNQQVDNFRSMKSNWIDDFIGRSLFMIYIGTEDKLNFTKNKPNALLHSLKASKFAIQLLARWVAYQYRDKNTRQGNECYEPLNDLVKQHNEKIGPMLNDLAKTNPGRTSQH.

A signal peptide spans 1-49 (MYRVYKNNKFILISIPRITNKLWQKNCNLVILLGVLLVLTLFHDPIIVA). Residue Ser67 is the Nucleophile of the active site. Asn181 carries N-linked (GlcNAc...) asparagine glycosylation.

This sequence belongs to the 'GDSL' lipolytic enzyme family.

The protein resides in the secreted. This chain is GDSL esterase/lipase At1g18120, found in Arabidopsis thaliana (Mouse-ear cress).